Here is a 111-residue protein sequence, read N- to C-terminus: MAKGGFPGGFNINNMIKQAQQMQEEIKKMQEELMQKTVEATAGGGMVKAVANGRKELVSIEINPDVVDKDDVETLEDLVLAAVNQALRNAEEMIASEMAKITGGLNIPGLF.

Belongs to the YbaB/EbfC family. In terms of assembly, homodimer.

It is found in the cytoplasm. The protein resides in the nucleoid. In terms of biological role, binds to DNA and alters its conformation. May be involved in regulation of gene expression, nucleoid organization and DNA protection. The polypeptide is Nucleoid-associated protein Teth39_2199 (Thermoanaerobacter pseudethanolicus (strain ATCC 33223 / 39E) (Clostridium thermohydrosulfuricum)).